A 261-amino-acid polypeptide reads, in one-letter code: Cytochrome c oxidase subunit 3 (261 aa).

The Mitochondrial matrix portion of the chain corresponds to 1-15 (MTHQTHAYHMVNPSP). A helical transmembrane segment spans residues 16–34 (WPLTGALSALLMTSGLVMW). At 35 to 40 (FHYNST) the chain is on the mitochondrial intermembrane side. Residues 41–66 (LLLTLGLTTNLLTMYQWWRDIIREST) traverse the membrane as a helical segment. Over 67–72 (FQGHHT) the chain is Mitochondrial matrix. The chain crosses the membrane as a helical span at residues 73–105 (PAVQKGLRYGMILFIISEVFFFSGFFWAFYHSS). Topologically, residues 106–128 (LAPTPELGGCWPPTGIHPLNPME) are mitochondrial intermembrane. The helical transmembrane segment at 129–152 (VPLLNTSVLLASGVSITWAHHSLM) threads the bilayer. Over 153 to 155 (EGN) the chain is Mitochondrial matrix. The helical transmembrane segment at 156 to 183 (RKHMLQALFITISLGIYFTLLQASEYYE) threads the bilayer. The Mitochondrial intermembrane portion of the chain corresponds to 184-190 (APFTISD). The chain crosses the membrane as a helical span at residues 191–223 (GVYGSTFFVATGFHGLHVIIGSTFLIVCFLRQL). The Mitochondrial matrix segment spans residues 224-232 (KFHFTSNHH). The helical transmembrane segment at 233–256 (FGFEAAAWYWHFVDVVWLFLYVSI) threads the bilayer. The Mitochondrial intermembrane portion of the chain corresponds to 257 to 261 (YWWGS).

This sequence belongs to the cytochrome c oxidase subunit 3 family. In terms of assembly, component of the cytochrome c oxidase (complex IV, CIV), a multisubunit enzyme composed of 14 subunits. The complex is composed of a catalytic core of 3 subunits MT-CO1, MT-CO2 and MT-CO3, encoded in the mitochondrial DNA, and 11 supernumerary subunits COX4I, COX5A, COX5B, COX6A, COX6B, COX6C, COX7A, COX7B, COX7C, COX8 and NDUFA4, which are encoded in the nuclear genome. The complex exists as a monomer or a dimer and forms supercomplexes (SCs) in the inner mitochondrial membrane with NADH-ubiquinone oxidoreductase (complex I, CI) and ubiquinol-cytochrome c oxidoreductase (cytochrome b-c1 complex, complex III, CIII), resulting in different assemblies (supercomplex SCI(1)III(2)IV(1) and megacomplex MCI(2)III(2)IV(2)).

The protein localises to the mitochondrion inner membrane. It carries out the reaction 4 Fe(II)-[cytochrome c] + O2 + 8 H(+)(in) = 4 Fe(III)-[cytochrome c] + 2 H2O + 4 H(+)(out). Functionally, component of the cytochrome c oxidase, the last enzyme in the mitochondrial electron transport chain which drives oxidative phosphorylation. The respiratory chain contains 3 multisubunit complexes succinate dehydrogenase (complex II, CII), ubiquinol-cytochrome c oxidoreductase (cytochrome b-c1 complex, complex III, CIII) and cytochrome c oxidase (complex IV, CIV), that cooperate to transfer electrons derived from NADH and succinate to molecular oxygen, creating an electrochemical gradient over the inner membrane that drives transmembrane transport and the ATP synthase. Cytochrome c oxidase is the component of the respiratory chain that catalyzes the reduction of oxygen to water. Electrons originating from reduced cytochrome c in the intermembrane space (IMS) are transferred via the dinuclear copper A center (CU(A)) of subunit 2 and heme A of subunit 1 to the active site in subunit 1, a binuclear center (BNC) formed by heme A3 and copper B (CU(B)). The BNC reduces molecular oxygen to 2 water molecules using 4 electrons from cytochrome c in the IMS and 4 protons from the mitochondrial matrix. The polypeptide is Cytochrome c oxidase subunit 3 (MT-CO3) (Rhinoceros unicornis (Greater Indian rhinoceros)).